The chain runs to 417 residues: Gamma-glutamyl phosphate reductase (417 aa).

The protein belongs to the gamma-glutamyl phosphate reductase family.

The protein localises to the cytoplasm. The enzyme catalyses L-glutamate 5-semialdehyde + phosphate + NADP(+) = L-glutamyl 5-phosphate + NADPH + H(+). The protein operates within amino-acid biosynthesis; L-proline biosynthesis; L-glutamate 5-semialdehyde from L-glutamate: step 2/2. In terms of biological role, catalyzes the NADPH-dependent reduction of L-glutamate 5-phosphate into L-glutamate 5-semialdehyde and phosphate. The product spontaneously undergoes cyclization to form 1-pyrroline-5-carboxylate. This chain is Gamma-glutamyl phosphate reductase, found in Proteus mirabilis (strain HI4320).